Here is a 347-residue protein sequence, read N- to C-terminus: Olfactory receptor 13C3 (347 aa).

Over 1-55 the chain is Extracellular; it reads MIVQLICTVCFLAVNTFHVRSSFDFLKADDMGEINQTLVSEFLLLGLSGYPKIEI. N-linked (GlcNAc...) asparagine glycosylation is present at asparagine 35. Residues 56-76 form a helical membrane-spanning segment; it reads VYFALILVMYLVILIGNGVLI. At 77–84 the chain is on the cytoplasmic side; the sequence is IASIFDSH. Residues 85–105 form a helical membrane-spanning segment; it reads FHTPMYFFLGNLSFLDICYTS. The Extracellular portion of the chain corresponds to 106–129; sequence SSVPSTLVSLISKKRNISFSGCAV. Cysteines 127 and 219 form a disulfide. Residues 130–150 traverse the membrane as a helical segment; that stretch reads QMFFGFAMGSTECLLLGMMAF. Over 151–169 the chain is Cytoplasmic; the sequence is DRYVAICNPLRYPIILSKV. Residues 170–190 form a helical membrane-spanning segment; the sequence is AYVLMASVSWLSGGINSAVQT. The Extracellular portion of the chain corresponds to 191-227; the sequence is LLAMRLPFCGNNIINHFACEILAVLKLACADISLNII. A helical transmembrane segment spans residues 228-247; sequence TMVISNMAFLVLPLMVIFFS. At 248–267 the chain is on the cytoplasmic side; the sequence is YMFILYTILQMNSATGRRKA. A helical membrane pass occupies residues 268-288; sequence FSTCSAHLTVVIIFYGTIFFM. Topologically, residues 289–307 are extracellular; it reads YAKPKSQDLIGEEKLQALD. A helical transmembrane segment spans residues 308 to 328; it reads KLISLFYGVVTPMLNPILYSL. Residues 329–347 are Cytoplasmic-facing; the sequence is RNKDVKAAVKYLLNKKPIH.

Belongs to the G-protein coupled receptor 1 family.

The protein resides in the cell membrane. Odorant receptor. The chain is Olfactory receptor 13C3 (OR13C3) from Homo sapiens (Human).